The sequence spans 218 residues: MEPGFWHEKWHQQQIGFHQQDINPFLVKYWQKLGLPADTQVFVPLCGKSLDMCFLAEQGHQVIGCELNELAVQQFFSDNQLEMTQTTVGEHQHYHTEQISLYQGDIFTLPKTITQAVTAFYDRAALIAWPESMRAQYAKQLASLLPSGSVGLLVTLDYPQEALIGPPFAVSPTWVEQHLSDDFDIEVLASQDVLADNPRFIKKAVPWLNEAAYLLKRK.

Tryptophan 10, leucine 45, glutamate 66, and arginine 123 together coordinate S-adenosyl-L-methionine.

Belongs to the class I-like SAM-binding methyltransferase superfamily. TPMT family.

The protein resides in the cytoplasm. It carries out the reaction S-adenosyl-L-methionine + a thiopurine = S-adenosyl-L-homocysteine + a thiopurine S-methylether.. The polypeptide is Thiopurine S-methyltransferase (Shewanella baltica (strain OS223)).